Consider the following 409-residue polypeptide: Protein ROOT PRIMORDIUM DEFECTIVE 1 (409 aa).

Residues V47–P386 enclose the PORR domain.

Expressed in roots, hypocotyls, cotyledons and shoot apex.

Its function is as follows. Involved in pre-arranging the maintenance of the active cell proliferation during root primordium development. Does not seem to be involved in cell cycle progression. The chain is Protein ROOT PRIMORDIUM DEFECTIVE 1 (RPD1) from Arabidopsis thaliana (Mouse-ear cress).